The chain runs to 122 residues: Large ribosomal subunit protein uL14 (122 aa).

This sequence belongs to the universal ribosomal protein uL14 family. As to quaternary structure, part of the 50S ribosomal subunit. Forms a cluster with proteins L3 and L19. In the 70S ribosome, L14 and L19 interact and together make contacts with the 16S rRNA in bridges B5 and B8.

Binds to 23S rRNA. Forms part of two intersubunit bridges in the 70S ribosome. This is Large ribosomal subunit protein uL14 from Allorhizobium ampelinum (strain ATCC BAA-846 / DSM 112012 / S4) (Agrobacterium vitis (strain S4)).